We begin with the raw amino-acid sequence, 181 residues long: ATP-dependent protease subunit HslV (181 aa).

Residue threonine 7 is part of the active site. Na(+)-binding residues include alanine 166, cysteine 169, and threonine 172.

Belongs to the peptidase T1B family. HslV subfamily. A double ring-shaped homohexamer of HslV is capped on each side by a ring-shaped HslU homohexamer. The assembly of the HslU/HslV complex is dependent on binding of ATP.

It is found in the cytoplasm. The catalysed reaction is ATP-dependent cleavage of peptide bonds with broad specificity.. Allosterically activated by HslU binding. Functionally, protease subunit of a proteasome-like degradation complex believed to be a general protein degrading machinery. The sequence is that of ATP-dependent protease subunit HslV from Anaeromyxobacter sp. (strain Fw109-5).